The chain runs to 393 residues: S-adenosylmethionine synthase (393 aa).

His-17 lines the ATP pocket. Asp-19 provides a ligand contact to Mg(2+). Residue Glu-45 coordinates K(+). L-methionine-binding residues include Glu-58 and Gln-106. Residues 106–116 form a flexible loop region; the sequence is QSAHIAQGVDA. ATP contacts are provided by residues 171 to 173, 237 to 238, Asp-246, 252 to 253, Ala-269, and Lys-273; these read DAK, KF, and RK. Asp-246 contributes to the L-methionine binding site. Residue Lys-277 participates in L-methionine binding.

It belongs to the AdoMet synthase family. As to quaternary structure, homotetramer; dimer of dimers. Requires Mg(2+) as cofactor. The cofactor is K(+).

The protein localises to the cytoplasm. It catalyses the reaction L-methionine + ATP + H2O = S-adenosyl-L-methionine + phosphate + diphosphate. It functions in the pathway amino-acid biosynthesis; S-adenosyl-L-methionine biosynthesis; S-adenosyl-L-methionine from L-methionine: step 1/1. Its function is as follows. Catalyzes the formation of S-adenosylmethionine (AdoMet) from methionine and ATP. The overall synthetic reaction is composed of two sequential steps, AdoMet formation and the subsequent tripolyphosphate hydrolysis which occurs prior to release of AdoMet from the enzyme. The sequence is that of S-adenosylmethionine synthase from Jannaschia sp. (strain CCS1).